Reading from the N-terminus, the 251-residue chain is Cobalt transport protein CbiM (251 aa).

The signal sequence occupies residues 1 to 27; it reads MNKKKNTILIGLYFLVGIMLFPDRIYA. The next 6 membrane-spanning stretches (helical) occupy residues 35–55, 66–86, 103–123, 131–151, 166–186, and 208–228; these read LPVK…ALGI, GPGI…LSSL, LGAI…VLIF, GGLT…PFVA, WLSV…TTAT, and VFAT…VLIF.

It belongs to the CbiM family. Forms an energy-coupling factor (ECF) transporter complex composed of an ATP-binding protein (A component, CbiO), a transmembrane protein (T component, CbiQ) and 2 possible substrate-capture proteins (S components, CbiM and CbiN) of unknown stoichimetry.

It is found in the cell membrane. It functions in the pathway cofactor biosynthesis; adenosylcobalamin biosynthesis. Functionally, part of the energy-coupling factor (ECF) transporter complex CbiMNOQ involved in cobalt import. The protein is Cobalt transport protein CbiM of Acetohalobium arabaticum (strain ATCC 49924 / DSM 5501 / Z-7288).